We begin with the raw amino-acid sequence, 937 residues long: AP-2 complex subunit beta (937 aa).

Thr-2 is modified (N-acetylthreonine). Ser-4 bears the Phosphoserine mark. At Lys-265 the chain carries N6-acetyllysine. 2 positions are modified to phosphotyrosine: Tyr-737 and Tyr-928.

This sequence belongs to the adaptor complexes large subunit family. As to quaternary structure, adapter protein complex 2 (AP-2) is a heterotetramer composed of two large adaptins (alpha-type subunit AP2A1 or AP2A2 and beta-type subunit AP2B1), a medium adaptin (mu-type subunit AP2M1) and a small adaptin (sigma-type subunit AP2S1). Interacts with EPN1. Interacts with EPS15; clathrin competes with EPS15. Interacts with SNAP91; clathrin competes with SNAP91. Interacts with CLTC; clathrin competes with EPS15, SNAP91 and PIP5K1C. Interacts with LDLRAP1. Interacts with AMPH and BIN1. Interacts with ARF6 (GDP-bound). Interacts (dephosphorylated at Tyr-737) with ARRB1; phosphorylation of AP2B1 at Tyr-737 disrupts the interaction. Interacts with SLC2A8. Interacts with SCYL1 and SCYL2. Interacts with TGFBR1 and TGFBR2. Interacts with PIP5K1C; clathrin competes with PIP5K1C. Interacts with DENND1B. Interacts with FCHO1. Interacts with RFTN1. Interacts with KIAA1107. Together with AP2A1 or AP2A2 and AP2M1, it interacts with ADAM10; this interaction facilitates ADAM10 endocytosis from the plasma membrane during long-term potentiation in hippocampal neurons. The N-terminus is blocked. In terms of processing, phosphorylation at Tyr-737 by SRC occurs at the plasma membrane in clathrin-coated vesicles (CCVs).

Its subcellular location is the cell membrane. It is found in the membrane. It localises to the coated pit. Component of the adaptor protein complex 2 (AP-2). Adaptor protein complexes function in protein transport via transport vesicles in different membrane traffic pathways. Adaptor protein complexes are vesicle coat components and appear to be involved in cargo selection and vesicle formation. AP-2 is involved in clathrin-dependent endocytosis in which cargo proteins are incorporated into vesicles surrounded by clathrin (clathrin-coated vesicles, CCVs) which are destined for fusion with the early endosome. The clathrin lattice serves as a mechanical scaffold but is itself unable to bind directly to membrane components. Clathrin-associated adaptor protein (AP) complexes which can bind directly to both the clathrin lattice and to the lipid and protein components of membranes are considered to be the major clathrin adaptors contributing the CCV formation. AP-2 also serves as a cargo receptor to selectively sort the membrane proteins involved in receptor-mediated endocytosis. AP-2 seems to play a role in the recycling of synaptic vesicle membranes from the presynaptic surface. AP-2 recognizes Y-X-X-[FILMV] (Y-X-X-Phi) and [ED]-X-X-X-L-[LI] endocytosis signal motifs within the cytosolic tails of transmembrane cargo molecules. AP-2 may also play a role in maintaining normal post-endocytic trafficking through the ARF6-regulated, non-clathrin pathway. During long-term potentiation in hippocampal neurons, AP-2 is responsible for the endocytosis of ADAM10. The AP-2 beta subunit acts via its C-terminal appendage domain as a scaffolding platform for endocytic accessory proteins; at least some clathrin-associated sorting proteins (CLASPs) are recognized by their [DE]-X(1,2)-F-X-X-[FL]-X-X-X-R motif. The AP-2 beta subunit binds to clathrin heavy chain, promoting clathrin lattice assembly; clathrin displaces at least some CLASPs from AP2B1 which probably then can be positioned for further coat assembly. The polypeptide is AP-2 complex subunit beta (AP2B1) (Bos taurus (Bovine)).